The primary structure comprises 155 residues: Transcriptional repressor NrdR (155 aa).

Residues 3–34 (CPFCGNVDTQVKDSRPAEDHVSIRRRRFCPAC) fold into a zinc finger. The ATP-cone domain occupies 49–139 (LVVIKTNGKR…VYKNFQAADD (91 aa)).

Belongs to the NrdR family. Requires Zn(2+) as cofactor.

Its function is as follows. Negatively regulates transcription of bacterial ribonucleotide reductase nrd genes and operons by binding to NrdR-boxes. This Ruegeria sp. (strain TM1040) (Silicibacter sp.) protein is Transcriptional repressor NrdR.